Consider the following 832-residue polypeptide: Protein P (832 aa).

Residues 1 to 177 (MPLSYQHFRK…FCGSPYSWEQ (177 aa)) form a terminal protein domain (TP) region. Residues 178 to 335 (ELQHGAESFH…YCLSHIVNLL (158 aa)) form a spacer region. The segment covering 186 to 206 (FHQQSSGILSRPSVGSSLQSK) has biased composition (polar residues). 2 disordered regions span residues 186–255 (FHQQ…GHNA) and 280–305 (TSEN…RSQS). Residues 210 to 220 (SRLGLQSQQGH) are compositionally biased toward low complexity. The tract at residues 336 to 679 (EDWGPCAEHG…YLNLYPVARQ (344 aa)) is polymerase/reverse transcriptase domain (RT). The Reverse transcriptase domain occupies 346–589 (EHHIRIPRTP…YSLNFMGYVI (244 aa)). Residues aspartate 418, aspartate 540, and aspartate 541 each contribute to the Mg(2+) site.

It belongs to the hepadnaviridae P protein family.

The enzyme catalyses DNA(n) + a 2'-deoxyribonucleoside 5'-triphosphate = DNA(n+1) + diphosphate. It catalyses the reaction Endonucleolytic cleavage to 5'-phosphomonoester.. Its activity is regulated as follows. Activated by host HSP70 and HSP40 in vitro to be able to bind the epsilon loop of the pgRNA. Because deletion of the RNase H region renders the protein partly chaperone-independent, the chaperones may be needed indirectly to relieve occlusion of the RNA-binding site by this domain. Inhibited by several reverse-transcriptase inhibitors: Lamivudine, Adefovir and Entecavir. Its function is as follows. Multifunctional enzyme that converts the viral RNA genome into dsDNA in viral cytoplasmic capsids. This enzyme displays a DNA polymerase activity that can copy either DNA or RNA templates, and a ribonuclease H (RNase H) activity that cleaves the RNA strand of RNA-DNA heteroduplexes in a partially processive 3'- to 5'-endonucleasic mode. Neo-synthesized pregenomic RNA (pgRNA) are encapsidated together with the P protein, and reverse-transcribed inside the nucleocapsid. Initiation of reverse-transcription occurs first by binding the epsilon loop on the pgRNA genome, and is initiated by protein priming, thereby the 5'-end of (-)DNA is covalently linked to P protein. Partial (+)DNA is synthesized from the (-)DNA template and generates the relaxed circular DNA (RC-DNA) genome. After budding and infection, the RC-DNA migrates in the nucleus, and is converted into a plasmid-like covalently closed circular DNA (cccDNA). The activity of P protein does not seem to be necessary for cccDNA generation, and is presumably released from (+)DNA by host nuclear DNA repair machinery. The chain is Protein P from Hepatitis B virus genotype D subtype ayw (isolate Australia/AustKW/1991) (HBV-D).